We begin with the raw amino-acid sequence, 640 residues long: GATA zinc finger domain-containing protein 12 (640 aa).

Disordered stretches follow at residues Ser-121 to Ile-209 and Gln-355 to Asn-390. Composition is skewed to low complexity over residues Asn-122–Ile-209 and Gln-355–Gln-379. A compositionally biased stretch (polar residues) spans Pro-380 to Asn-390. The GATA-type zinc-finger motif lies at Cys-506–Cys-531.

In Dictyostelium discoideum (Social amoeba), this protein is GATA zinc finger domain-containing protein 12 (gtaL).